The primary structure comprises 423 residues: Glutaminase (423 aa).

Positions 27-312 (GEVAQYIPQL…LSEDMGLHLM (286 aa)) are glutaminase. Residues S69, N119, E165, N172, Y196, Y248, and V266 each coordinate substrate. The STAS domain maps to 321–423 (AVRAIEERGD…SPQVDDPEEL (103 aa)).

This sequence belongs to the glutaminase family. As to quaternary structure, homotetramer.

The catalysed reaction is L-glutamine + H2O = L-glutamate + NH4(+). In Corynebacterium efficiens (strain DSM 44549 / YS-314 / AJ 12310 / JCM 11189 / NBRC 100395), this protein is Glutaminase (glsA).